Here is a 453-residue protein sequence, read N- to C-terminus: Sodium/alanine symporter AgcS (453 aa).

At 1–17 (MDFVSLVNTVNSFVWGP) the chain is on the extracellular side. Residues 18–32 (YMLVLLLGTGIFLTL) form a helical membrane-spanning segment. Topologically, residues 33-67 (RLGFMQIHTLPYALKLAFSKHQDETSEGDISHFQA) are cytoplasmic. A helical membrane pass occupies residues 68-89 (LMTALAATIGTGNIAGVATAYV). Residue Thr-75 coordinates D-alanine. L-alanine is bound by residues Thr-75 and Gly-79. Asn-80 is a D-alanine binding site. The Extracellular portion of the chain corresponds to 90–92 (LGG). The chain crosses the membrane as a helical span at residues 93 to 111 (PGAIFWMWVTAFFGMATKY). Over 112–148 (AEAVLAIKYRTVDDNGEMAGGPMYFLEKGLPDHGLGK) the chain is Cytoplasmic. Residues 149-179 (ILGVAFAFFGAFAAFGIGNMVQTNSVADAVA) traverse the membrane as a helical segment. Residue Gln-170 coordinates D-alanine. Gln-170 lines the L-alanine pocket. Residues 180-186 (SNFGVDP) are Extracellular-facing. Residues 187–202 (LITGFVLAIFTAAVIL) form a helical membrane-spanning segment. Residues 203–206 (GGIK) are Cytoplasmic-facing. Residues 207-233 (SIGKATGIIVPFMAVFYILAGLVILAM) traverse the membrane as a helical segment. The Extracellular segment spans residues 234–258 (NIGYIIPAFGTIFSSAFNFSAGFGA). Residues 259-274 (LIGTAIMWGVKRGVFS) traverse the membrane as a helical segment. 273–274 (FS) serves as a coordination point for D-alanine. 273 to 276 (FSNE) serves as a coordination point for L-alanine. Residues 275 to 300 (NEAGLGSAPIAAAAAKTDHPGRQALV) lie on the Cytoplasmic side of the membrane. Residues 301-322 (SMTGTFLDTIVVCTITGLVLTI) form a helical membrane-spanning segment. The Extracellular portion of the chain corresponds to 323–350 (AGLKAFPGLTDLTGASLTAASFDALMPM). The chain crosses the membrane as a helical span at residues 351 to 378 (GGLIVTIGLVFFAYSTVLGWSYYGEKCF). Residues 379-386 (EYLIGTKG) lie on the Cytoplasmic side of the membrane. A helical membrane pass occupies residues 387-403 (IRLYRIAFVLVAFWGAT). Over 404–408 (ASLPL) the chain is Extracellular. Residues 409-430 (VWNIADTLNGAMAIPNLIGLLL) traverse the membrane as a helical segment. Residues 431 to 453 (LSGVVVSETKAFNEIRKNEAKNA) are Cytoplasmic-facing.

It belongs to the alanine or glycine:cation symporter (AGCS) (TC 2.A.25) family.

It localises to the cell membrane. It catalyses the reaction D-alanine(in) + Na(+)(in) = D-alanine(out) + Na(+)(out). The enzyme catalyses L-alanine(in) + Na(+)(in) = L-alanine(out) + Na(+)(out). It carries out the reaction glycine(in) + Na(+)(in) = glycine(out) + Na(+)(out). Functionally, catalyzes the sodium-dependent uptake of extracellular D-alanine and L-alanine. Can also transport glycine. Binds glycine and both enantiomers of alanine, while strictly excluding other amino acids. This is Sodium/alanine symporter AgcS from Methanococcus maripaludis (strain DSM 14266 / JCM 13030 / NBRC 101832 / S2 / LL).